A 455-amino-acid polypeptide reads, in one-letter code: Keratin, type I cuticular Ha5 (455 aa).

Residues 1 to 97 (MASKCLKASF…FGEGILTGNE (97 aa)) form a head region. The IF rod domain maps to 97 to 408 (EKETMQFLND…GLLDSEDCKL (312 aa)). The segment at 98-132 (KETMQFLNDRLASYLEKVRQLERENAELESRIRDW) is coil 1A. The interval 133-143 (CEQQVPYLCPD) is linker 1. Positions 144–244 (YQSYFQTIEE…HEEEVNSLRC (101 aa)) are coil 1B. The tract at residues 245-260 (QLGDRLNVEVDAAPPV) is linker 12. A coil 2 region spans residues 261–404 (DLNRVLNEMR…STYRGLLDSE (144 aa)). The segment at 405-455 (DCKLPCNPCAPDHSPSKSCLPCLPAASCGPGTAHTTCSPRPICVSCPGSRF) is tail.

It belongs to the intermediate filament family.

This is Keratin, type I cuticular Ha5 from Ovis aries (Sheep).